A 364-amino-acid polypeptide reads, in one-letter code: Aminomethyltransferase (364 aa).

This sequence belongs to the GcvT family. As to quaternary structure, the glycine cleavage system is composed of four proteins: P, T, L and H.

The catalysed reaction is N(6)-[(R)-S(8)-aminomethyldihydrolipoyl]-L-lysyl-[protein] + (6S)-5,6,7,8-tetrahydrofolate = N(6)-[(R)-dihydrolipoyl]-L-lysyl-[protein] + (6R)-5,10-methylene-5,6,7,8-tetrahydrofolate + NH4(+). In terms of biological role, the glycine cleavage system catalyzes the degradation of glycine. This Thermotoga petrophila (strain ATCC BAA-488 / DSM 13995 / JCM 10881 / RKU-1) protein is Aminomethyltransferase.